The primary structure comprises 362 residues: GMP reductase (362 aa).

NADP(+)-binding positions include 26-27 (SR), Lys-78, 129-131 (DVA), and 180-181 (IG). 3 residues coordinate K(+): Gly-181, Gly-183, and Cys-186. Cys-186 functions as the Thioimidate intermediate in the catalytic mechanism. Thr-188 functions as the Proton donor/acceptor in the catalytic mechanism. Residue Arg-189 participates in K(+) binding. Residues 219 to 221 (DGG), 242 to 243 (GG), 268 to 270 (GMS), and 286 to 290 (RASEG) contribute to the GMP site. NADP(+) is bound by residues Met-269, 285-286 (YR), and 314-317 (STCT).

It belongs to the IMPDH/GMPR family.

The enzyme catalyses IMP + NH4(+) + NADP(+) = GMP + NADPH + 2 H(+). Catalyzes the irreversible NADPH-dependent deamination of GMP to IMP. It functions in the conversion of nucleobase, nucleoside and nucleotide derivatives of G to A nucleotides, and in maintaining the intracellular balance of A and G nucleotides. This Phytophthora infestans (Potato late blight agent) protein is GMP reductase.